Consider the following 376-residue polypeptide: Cinnamyl alcohol dehydrogenase 2 (376 aa).

Residue C44 participates in Zn(2+) binding. Residue S46 coordinates NADP(+). Zn(2+)-binding residues include H66, E67, C97, C100, C103, C111, and C161. NADP(+)-binding positions include T165, G187 to G192, S210 to K215, T250, G274, and S297 to I299.

It belongs to the zinc-containing alcohol dehydrogenase family. In terms of assembly, homodimer. Requires Zn(2+) as cofactor. In terms of tissue distribution, expressed at the base of the stems.

It carries out the reaction (E)-cinnamyl alcohol + NADP(+) = (E)-cinnamaldehyde + NADPH + H(+). The enzyme catalyses (E)-coniferol + NADP(+) = (E)-coniferaldehyde + NADPH + H(+). It catalyses the reaction (E)-sinapyl alcohol + NADP(+) = (E)-sinapaldehyde + NADPH + H(+). The catalysed reaction is (E)-4-coumaroyl alcohol + NADP(+) = (E)-4-coumaraldehyde + NADPH + H(+). It carries out the reaction (E)-caffeyl alcohol + NADP(+) = (E)-caffeyl aldehyde + NADPH + H(+). It participates in aromatic compound metabolism; phenylpropanoid biosynthesis. Involved in lignin biosynthesis. Catalyzes the final step specific for the production of lignin monomers. Catalyzes the NADPH-dependent reduction of coniferaldehyde, 5-hydroxyconiferaldehyde, sinapaldehyde, 4-coumaraldehyde and caffeyl aldehyde to their respective alcohols. The protein is Cinnamyl alcohol dehydrogenase 2 of Arabidopsis thaliana (Mouse-ear cress).